The sequence spans 284 residues: 4-diphosphocytidyl-2-C-methyl-D-erythritol kinase (284 aa).

Lysine 22 is a catalytic residue. Position 104 to 114 (104 to 114 (PVGAGLGGASS)) interacts with ATP. Aspartate 146 is a catalytic residue.

This sequence belongs to the GHMP kinase family. IspE subfamily.

It catalyses the reaction 4-CDP-2-C-methyl-D-erythritol + ATP = 4-CDP-2-C-methyl-D-erythritol 2-phosphate + ADP + H(+). Its pathway is isoprenoid biosynthesis; isopentenyl diphosphate biosynthesis via DXP pathway; isopentenyl diphosphate from 1-deoxy-D-xylulose 5-phosphate: step 3/6. In terms of biological role, catalyzes the phosphorylation of the position 2 hydroxy group of 4-diphosphocytidyl-2C-methyl-D-erythritol. This Hydrogenobaculum sp. (strain Y04AAS1) protein is 4-diphosphocytidyl-2-C-methyl-D-erythritol kinase.